The sequence spans 269 residues: Eukaryotic translation initiation factor 3 subunit G-1 (269 aa).

Residues 188-266 (AAIRISNLSE…LILSVEWSKP (79 aa)) enclose the RRM domain. Serine 198 is subject to Phosphoserine.

It belongs to the eIF-3 subunit G family. As to quaternary structure, component of the eukaryotic translation initiation factor 3 (eIF-3) complex. The eIF-3 complex interacts with pix.

The protein resides in the cytoplasm. In terms of biological role, RNA-binding component of the eukaryotic translation initiation factor 3 (eIF-3) complex, which is involved in protein synthesis of a specialized repertoire of mRNAs and, together with other initiation factors, stimulates binding of mRNA and methionyl-tRNAi to the 40S ribosome. The eIF-3 complex specifically targets and initiates translation of a subset of mRNAs involved in cell proliferation. This subunit can bind 18S rRNA. In Drosophila melanogaster (Fruit fly), this protein is Eukaryotic translation initiation factor 3 subunit G-1.